A 483-amino-acid polypeptide reads, in one-letter code: Ribulose bisphosphate carboxylase large chain (483 aa).

Residues 1–2 constitute a propeptide that is removed on maturation; it reads MS. Substrate contacts are provided by N123 and T173. K175 (proton acceptor) is an active-site residue. K177 serves as a coordination point for substrate. Mg(2+) is bound by residues K201, D203, and E204. N6-carboxylysine is present on K201. S208 is modified (phosphoserine). The active-site Proton acceptor is the H294. R295 and H327 together coordinate substrate. Residue T330 is modified to Phosphothreonine. S379 is a substrate binding site.

The protein belongs to the RuBisCO large chain family. Type I subfamily. As to quaternary structure, heterohexadecamer of 8 large chains and 8 small chains; disulfide-linked. The disulfide link is formed within the large subunit homodimers. Requires Mg(2+) as cofactor. In terms of processing, the disulfide bond which can form in the large chain dimeric partners within the hexadecamer appears to be associated with oxidative stress and protein turnover.

It localises to the plastid. The protein resides in the chloroplast. The catalysed reaction is 2 (2R)-3-phosphoglycerate + 2 H(+) = D-ribulose 1,5-bisphosphate + CO2 + H2O. The enzyme catalyses D-ribulose 1,5-bisphosphate + O2 = 2-phosphoglycolate + (2R)-3-phosphoglycerate + 2 H(+). Its function is as follows. RuBisCO catalyzes two reactions: the carboxylation of D-ribulose 1,5-bisphosphate, the primary event in carbon dioxide fixation, as well as the oxidative fragmentation of the pentose substrate in the photorespiration process. Both reactions occur simultaneously and in competition at the same active site. This Aethionema cordifolium (Lebanon stonecress) protein is Ribulose bisphosphate carboxylase large chain.